The primary structure comprises 581 residues: Probable bifunctional SAT/APS kinase 2 (581 aa).

Residues 1–200 (MSGFVVWFTG…AAGGARGLIA (200 aa)) form an adenylsulfate kinase region. 10–17 (GLSGAGKS) is a binding site for ATP. The active-site Phosphoserine intermediate is the S84. A sulfate adenylyltransferase region spans residues 201–581 (PHGGELVNRW…ILIESMRSSS (381 aa)).

It in the N-terminal section; belongs to the APS kinase family. In the C-terminal section; belongs to the sulfate adenylyltransferase family.

It carries out the reaction sulfate + ATP + H(+) = adenosine 5'-phosphosulfate + diphosphate. The enzyme catalyses adenosine 5'-phosphosulfate + ATP = 3'-phosphoadenylyl sulfate + ADP + H(+). Its pathway is sulfur metabolism; hydrogen sulfide biosynthesis; sulfite from sulfate: step 1/3. It participates in sulfur metabolism; hydrogen sulfide biosynthesis; sulfite from sulfate: step 2/3. The chain is Probable bifunctional SAT/APS kinase 2 (sat2/cysC2) from Sorangium cellulosum (strain So ce56) (Polyangium cellulosum (strain So ce56)).